We begin with the raw amino-acid sequence, 462 residues long: Argininosuccinate lyase (462 aa).

Belongs to the lyase 1 family. Argininosuccinate lyase subfamily.

It is found in the cytoplasm. The catalysed reaction is 2-(N(omega)-L-arginino)succinate = fumarate + L-arginine. Its pathway is amino-acid biosynthesis; L-arginine biosynthesis; L-arginine from L-ornithine and carbamoyl phosphate: step 3/3. The protein is Argininosuccinate lyase of Bacillus cereus (strain ZK / E33L).